Here is a 1574-residue protein sequence, read N- to C-terminus: Sterol 3-beta-glucosyltransferase (1574 aa).

Over residues 37–48 (TFLNQNPASPNN) the composition is skewed to polar residues. Disordered stretches follow at residues 37-61 (TFLN…NKDE) and 102-170 (ASNA…HSKL). Composition is skewed to basic and acidic residues over residues 107–121 (EAKD…RSSR) and 128–138 (PEYRREYKLDY). Residues 139-148 (DIDESEEDDI) are compositionally biased toward acidic residues. A compositionally biased stretch (basic and acidic residues) spans 149–170 (ESTRDENTLKPKTEDTSVHSKL). The GRAM 1 domain maps to 253-288 (DKLKRVFELNDDDYFYGNYNVWLVRDVLLQGHIYLT). One can recognise a PH domain in the interval 323 to 471 (DVIQSGSLGM…WVNNIVKVVF (149 aa)). Disordered stretches follow at residues 389 to 413 (GRND…SGDE), 538 to 559 (RMKK…GNEP), 651 to 722 (ASHR…PVQG), and 774 to 806 (DALS…KKKN). Over residues 692 to 701 (ITPSKIFSNK) the composition is skewed to polar residues. The segment covering 702 to 711 (SRTESEKSTP) has biased composition (basic and acidic residues). A compositionally biased stretch (polar residues) spans 712 to 722 (DRSQTTSPVQG). Positions 854–920 (RHFQERFSFN…IDVDTCSKEK (67 aa)) constitute a GRAM 2 domain. The span at 964–976 (RESGNESSDDNKS) shows a compositional bias: basic and acidic residues. Positions 964 to 996 (RESGNESSDDNKSAQHGKSGCFQKTPSSAETTK) are disordered. The segment covering 985–996 (FQKTPSSAETTK) has biased composition (polar residues). 12 residues coordinate UDP-alpha-D-glucose: S1057, R1058, D1060, N1333, I1364, H1366, H1379, S1382, G1383, T1384, D1403, and Q1404. Positions 1505–1574 (DSDTYDADHD…DNTTVTDANK (70 aa)) are disordered. Residues 1510 to 1533 (DADHDSDKESDHDQTYEQDNHSDY) are compositionally biased toward basic and acidic residues. The span at 1563 to 1574 (GNDNTTVTDANK) shows a compositional bias: polar residues.

This sequence belongs to the glycosyltransferase 28 family.

It is found in the cytoplasm. The protein resides in the membrane. It catalyses the reaction a sterol + UDP-alpha-D-glucose = a sterol 3-beta-D-glucoside + UDP + H(+). The catalysed reaction is ergosterol + UDP-alpha-D-glucose = ergosteryl 3-beta-D-glucoside + UDP + H(+). Sterol glycosyltransferase responsible for the glycosylation of ergosterol to form ergosterol-glucoside. The sequence is that of Sterol 3-beta-glucosyltransferase from Debaryomyces hansenii (strain ATCC 36239 / CBS 767 / BCRC 21394 / JCM 1990 / NBRC 0083 / IGC 2968) (Yeast).